Reading from the N-terminus, the 316-residue chain is Meiotically up-regulated gene 154 protein (316 aa).

4 consecutive transmembrane segments (helical) span residues 41–61, 88–108, 159–179, and 186–206; these read YSIP…IYIK, AFLS…FIFS, FLLN…WFYS, and LLTF…SLLL. The interval 291–316 is disordered; it reads HDSGISRDSSSPFKRFPHLSDGSSRF.

The protein localises to the endoplasmic reticulum membrane. Has a role in meiosis. This chain is Meiotically up-regulated gene 154 protein (mug154), found in Schizosaccharomyces pombe (strain 972 / ATCC 24843) (Fission yeast).